Here is an 870-residue protein sequence, read N- to C-terminus: DNA mismatch repair protein MutS (870 aa).

629–636 (GPNMGGKS) contacts ATP.

It belongs to the DNA mismatch repair MutS family.

In terms of biological role, this protein is involved in the repair of mismatches in DNA. It is possible that it carries out the mismatch recognition step. This protein has a weak ATPase activity. The chain is DNA mismatch repair protein MutS from Polaromonas naphthalenivorans (strain CJ2).